Consider the following 237-residue polypeptide: Nodulation protein NolA (237 aa).

The region spanning 10-79 (RWRIGELAEA…LVEIRKAMEG (70 aa)) is the HTH merR-type domain. Positions 13-32 (IGELAEATGVTVRTLHHYEH) form a DNA-binding region, H-T-H motif.

Its function is as follows. Involved in genotype-specific nodulation of soybeans. The chain is Nodulation protein NolA (nolA) from Bradyrhizobium diazoefficiens (strain JCM 10833 / BCRC 13528 / IAM 13628 / NBRC 14792 / USDA 110).